Reading from the N-terminus, the 30-residue chain is Matrix Gla protein (30 aa).

Phosphoserine occurs at positions 2, 3, and 5.

Belongs to the osteocalcin/matrix Gla protein family. In terms of processing, requires vitamin K-dependent gamma-carboxylation for its function.

The protein localises to the secreted. Associates with the organic matrix of calcified cartilage. This chain is Matrix Gla protein (mgp), found in Prionace glauca (Blue shark).